Here is a 351-residue protein sequence, read N- to C-terminus: Probable E3 ubiquitin-protein ligase sinah (351 aa).

Residues 1 to 38 (MSVRNSRPQLSWPERVSPQRTIDTPTASGEMLTRRQSA) form a disordered region. The span at 18–27 (PQRTIDTPTA) shows a compositional bias: polar residues. Residues 106 to 141 (CPVCFGYIMPPIMQCPRGHLICSTCRSKLTICPVCR) form an RING-type zinc finger. The tract at residues 155-346 (VASKLIFPCK…LALNVVIRKV (192 aa)) is SBD. The SIAH-type zinc finger occupies 158 to 218 (KLIFPCKHSH…VYQHLMSSHE (61 aa)). Zn(2+) is bound by residues C163, C170, H182, C186, C193, C200, H212, and H217.

It belongs to the SINA (Seven in absentia) family. Interacts with ebi and phyl.

It catalyses the reaction S-ubiquitinyl-[E2 ubiquitin-conjugating enzyme]-L-cysteine + [acceptor protein]-L-lysine = [E2 ubiquitin-conjugating enzyme]-L-cysteine + N(6)-ubiquitinyl-[acceptor protein]-L-lysine.. Its pathway is protein modification; protein ubiquitination. In terms of biological role, E3 ubiquitin-protein ligase that mediates ubiquitination and subsequent proteasomal degradation of target proteins. The adapter phyl is required to direct the degradation of the two isoforms of the transcriptional repressor Tramtrack (Ttk). E3 ubiquitin ligases accept ubiquitin from an E2 ubiquitin-conjugating enzyme in the form of a thioester and then directly transfers the ubiquitin to targeted substrates. It probably triggers the ubiquitin-mediated degradation of different substrates. A phyl-independent mechanism of degradation exists for isoform beta of ttk that involves motifs in the C-terminus of ttk. This Drosophila melanogaster (Fruit fly) protein is Probable E3 ubiquitin-protein ligase sinah (sinah).